A 406-amino-acid polypeptide reads, in one-letter code: Tryptophan synthase beta chain (406 aa).

Lys-99 carries the post-translational modification N6-(pyridoxal phosphate)lysine.

This sequence belongs to the TrpB family. Tetramer of two alpha and two beta chains. The cofactor is pyridoxal 5'-phosphate.

The enzyme catalyses (1S,2R)-1-C-(indol-3-yl)glycerol 3-phosphate + L-serine = D-glyceraldehyde 3-phosphate + L-tryptophan + H2O. Its pathway is amino-acid biosynthesis; L-tryptophan biosynthesis; L-tryptophan from chorismate: step 5/5. In terms of biological role, the beta subunit is responsible for the synthesis of L-tryptophan from indole and L-serine. Essential for production of nod factors and establishment of symbiosis. This Rhizobium etli (strain ATCC 51251 / DSM 11541 / JCM 21823 / NBRC 15573 / CFN 42) protein is Tryptophan synthase beta chain.